We begin with the raw amino-acid sequence, 130 residues long: Small ribosomal subunit protein uS8 (130 aa).

Belongs to the universal ribosomal protein uS8 family. In terms of assembly, part of the 30S ribosomal subunit. Contacts proteins S5 and S12.

Functionally, one of the primary rRNA binding proteins, it binds directly to 16S rRNA central domain where it helps coordinate assembly of the platform of the 30S subunit. In Pseudomonas fluorescens (strain Pf0-1), this protein is Small ribosomal subunit protein uS8.